The sequence spans 343 residues: uncharacterized protein (343 aa).

This is an uncharacterized protein from Acanthamoeba polyphaga mimivirus (APMV).